The following is an 89-amino-acid chain: Small ribosomal subunit protein uS15 (89 aa).

It belongs to the universal ribosomal protein uS15 family. As to quaternary structure, part of the 30S ribosomal subunit. Forms a bridge to the 50S subunit in the 70S ribosome, contacting the 23S rRNA.

In terms of biological role, one of the primary rRNA binding proteins, it binds directly to 16S rRNA where it helps nucleate assembly of the platform of the 30S subunit by binding and bridging several RNA helices of the 16S rRNA. Forms an intersubunit bridge (bridge B4) with the 23S rRNA of the 50S subunit in the ribosome. This chain is Small ribosomal subunit protein uS15, found in Leuconostoc mesenteroides subsp. mesenteroides (strain ATCC 8293 / DSM 20343 / BCRC 11652 / CCM 1803 / JCM 6124 / NCDO 523 / NBRC 100496 / NCIMB 8023 / NCTC 12954 / NRRL B-1118 / 37Y).